Reading from the N-terminus, the 183-residue chain is Ribosome-recycling factor (183 aa).

The protein belongs to the RRF family.

The protein resides in the cytoplasm. Its function is as follows. Responsible for the release of ribosomes from messenger RNA at the termination of protein biosynthesis. May increase the efficiency of translation by recycling ribosomes from one round of translation to another. The sequence is that of Ribosome-recycling factor from Mycoplasma mobile (strain ATCC 43663 / 163K / NCTC 11711) (Mesomycoplasma mobile).